Consider the following 297-residue polypeptide: Juvenile hormone acid O-methyltransferase (297 aa).

This sequence belongs to the methyltransferase superfamily. As to expression, predominantly expressed in corpora allata. Also expressed at low level in testis.

It catalyses the reaction (2E,6E)-farnesoate + S-adenosyl-L-methionine = methyl (2E,6E)-farnesoate + S-adenosyl-L-homocysteine. The catalysed reaction is juvenile hormone III carboxylate + S-adenosyl-L-methionine = juvenile hormone III + S-adenosyl-L-homocysteine. In terms of biological role, O-methyltransferase that transfers a methyl group from S-adenosyl-L-methionine (SAM) to the carboxyl group of juvenile hormone acids to produce active juvenile hormones in the corpora allata, the last step during juvenile hormone biosynthesis. Also able to methylate farnesoate to methyl farnesoate. In Drosophila melanogaster (Fruit fly), this protein is Juvenile hormone acid O-methyltransferase.